The following is a 236-amino-acid chain: Phosphoribosylaminoimidazole-succinocarboxamide synthase (236 aa).

It belongs to the SAICAR synthetase family.

The enzyme catalyses 5-amino-1-(5-phospho-D-ribosyl)imidazole-4-carboxylate + L-aspartate + ATP = (2S)-2-[5-amino-1-(5-phospho-beta-D-ribosyl)imidazole-4-carboxamido]succinate + ADP + phosphate + 2 H(+). It participates in purine metabolism; IMP biosynthesis via de novo pathway; 5-amino-1-(5-phospho-D-ribosyl)imidazole-4-carboxamide from 5-amino-1-(5-phospho-D-ribosyl)imidazole-4-carboxylate: step 1/2. This is Phosphoribosylaminoimidazole-succinocarboxamide synthase from Cellvibrio japonicus (strain Ueda107) (Pseudomonas fluorescens subsp. cellulosa).